Reading from the N-terminus, the 134-residue chain is Putative nickel-responsive regulator (134 aa).

Positions 78, 89, 91, and 97 each coordinate Ni(2+).

It belongs to the transcriptional regulatory CopG/NikR family. The cofactor is Ni(2+).

In terms of biological role, transcriptional regulator. The polypeptide is Putative nickel-responsive regulator (Chlorobium limicola (strain DSM 245 / NBRC 103803 / 6330)).